Consider the following 361-residue polypeptide: MSAVFDPSQYDAQLAAKAARLRELLAPFGAPEPSVFDSPREHYRLRAEFRLWREGGQRHYAMFAPGEKHKAILIDDFPIASQRINELMPRLKAAWQGNEDLNNRLFQVEFLTTLAGDAMVTLCYHRPLDEAWEAAAQQLASELNVSVIGRSKGKRVVIGRDYAVENLDIAGRTFSYRQPEGAFTQPNGAVNQKMLGWAFEAMGERDDDLLELYCGNGNFTLPLATRARQVLATEISKTSVNAALHNLDENGVDNVRLVRLSAEELTQALNEVRPFRRLEGIDLKSYDFGTVFVDPPRAGMDPDTCELTRRFERILYISCNPETLAQNIAQLQDTHRIERCALFDQFPYTHHMESGVLLVRR.

Residues Gln185, Tyr213, Asn218, Glu234, and Asp294 each coordinate S-adenosyl-L-methionine. Cys319 serves as the catalytic Nucleophile. The Proton acceptor role is filled by Glu353.

It belongs to the class I-like SAM-binding methyltransferase superfamily. RNA M5U methyltransferase family. TrmA subfamily.

The enzyme catalyses uridine(54) in tRNA + S-adenosyl-L-methionine = 5-methyluridine(54) in tRNA + S-adenosyl-L-homocysteine + H(+). It carries out the reaction uridine(341) in tmRNA + S-adenosyl-L-methionine = 5-methyluridine(341) in tmRNA + S-adenosyl-L-homocysteine + H(+). Functionally, dual-specificity methyltransferase that catalyzes the formation of 5-methyluridine at position 54 (m5U54) in all tRNAs, and that of position 341 (m5U341) in tmRNA (transfer-mRNA). The sequence is that of tRNA/tmRNA (uracil-C(5))-methyltransferase from Pseudomonas entomophila (strain L48).